The following is a 397-amino-acid chain: t-SNARE affecting a late Golgi compartment protein 2 (397 aa).

The Cytoplasmic segment spans residues 1–317; sequence MFRDRTNLFL…HYQKRTQKCK (317 aa). The stretch at 74-96 forms a coiled coil; it reads DIAQDVDDYLLEVRRLSEQLAKV. Phosphoserine is present on S109. The t-SNARE coiled-coil homology domain maps to 244–306; the sequence is EAYLRERDEE…KSADKELNKA (63 aa). A helical; Anchor for type IV membrane protein transmembrane segment spans residues 318–338; sequence VILLLTLCVIALFFFVMLKPH. The Vesicular portion of the chain corresponds to 339 to 397; the sequence is GGGSGGRNNGSNKYNNDDNKTVNNSHDDGSNTHINDEESNLPSIVEVTESENDALDDLL. Residues 341 to 397 are disordered; the sequence is GSGGRNNGSNKYNNDDNKTVNNSHDDGSNTHINDEESNLPSIVEVTESENDALDDLL. The segment covering 353 to 374 has biased composition (basic and acidic residues); that stretch reads NNDDNKTVNNSHDDGSNTHIND. A compositionally biased stretch (acidic residues) spans 386-397; that stretch reads TESENDALDDLL.

This sequence belongs to the syntaxin family. In terms of assembly, interacts with VPS45.

The protein localises to the golgi apparatus. Its subcellular location is the trans-Golgi network membrane. The protein resides in the endosome membrane. In terms of biological role, t-SNARE that functions in transport from the endosome to the late Golgi and on the endocytic pathway. In Saccharomyces cerevisiae (strain ATCC 204508 / S288c) (Baker's yeast), this protein is t-SNARE affecting a late Golgi compartment protein 2 (TLG2).